A 448-amino-acid polypeptide reads, in one-letter code: Tubulin alpha-5 chain (448 aa).

Residues 1–4 (MREC) carry the MREC motif motif. Position 11 (glutamine 11) interacts with GTP. Position 40 is an N6-acetyllysine (lysine 40). GTP is bound by residues glutamate 71, serine 140, glycine 144, threonine 145, threonine 179, asparagine 206, and asparagine 228. Residue glutamate 71 coordinates Mg(2+). Residue glutamate 254 is part of the active site.

This sequence belongs to the tubulin family. In terms of assembly, dimer of alpha and beta chains. A typical microtubule is a hollow water-filled tube with an outer diameter of 25 nm and an inner diameter of 15 nM. Alpha-beta heterodimers associate head-to-tail to form protofilaments running lengthwise along the microtubule wall with the beta-tubulin subunit facing the microtubule plus end conferring a structural polarity. Microtubules usually have 13 protofilaments but different protofilament numbers can be found in some organisms and specialized cells. Mg(2+) serves as cofactor. Post-translationally, some glutamate residues at the C-terminus are polyglycylated, resulting in polyglycine chains on the gamma-carboxyl group. Glycylation is mainly limited to tubulin incorporated into axonemes (cilia and flagella) whereas glutamylation is prevalent in neuronal cells, centrioles, axonemes, and the mitotic spindle. Both modifications can coexist on the same protein on adjacent residues, and lowering polyglycylation levels increases polyglutamylation, and reciprocally. The precise function of polyglycylation is still unclear. In terms of processing, some glutamate residues at the C-terminus are polyglutamylated, resulting in polyglutamate chains on the gamma-carboxyl group. Polyglutamylation plays a key role in microtubule severing by spastin (SPAST). SPAST preferentially recognizes and acts on microtubules decorated with short polyglutamate tails: severing activity by SPAST increases as the number of glutamates per tubulin rises from one to eight, but decreases beyond this glutamylation threshold. Acetylation of alpha chains at Lys-40 is located inside the microtubule lumen. This modification has been correlated with increased microtubule stability, intracellular transport and ciliary assembly.

The protein localises to the cytoplasm. The protein resides in the cytoskeleton. It catalyses the reaction GTP + H2O = GDP + phosphate + H(+). In terms of biological role, tubulin is the major constituent of microtubules, a cylinder consisting of laterally associated linear protofilaments composed of alpha- and beta-tubulin heterodimers. Microtubules grow by the addition of GTP-tubulin dimers to the microtubule end, where a stabilizing cap forms. Below the cap, tubulin dimers are in GDP-bound state, owing to GTPase activity of alpha-tubulin. In Gallus gallus (Chicken), this protein is Tubulin alpha-5 chain.